The following is a 473-amino-acid chain: Photosystem II CP43 reaction center protein (473 aa).

A propeptide spanning residues 1 to 14 (MKTLYSLRRFYHVE) is cleaved from the precursor. At Thr-15 the chain carries N-acetylthreonine. Phosphothreonine is present on Thr-15. 5 helical membrane passes run 69 to 93 (LFEV…PHLA), 134 to 155 (LIGP…RDKN), 178 to 200 (KAIY…RIID), 255 to 275 (KPFA…LSYS), and 291 to 312 (WYNN…ASQS). Glu-367 is a [CaMn4O5] cluster binding site. A helical membrane pass occupies residues 447-471 (RARAAAAGFEKGINRENEPVLTLRP).

The protein belongs to the PsbB/PsbC family. PsbC subfamily. As to quaternary structure, PSII is composed of 1 copy each of membrane proteins PsbA, PsbB, PsbC, PsbD, PsbE, PsbF, PsbH, PsbI, PsbJ, PsbK, PsbL, PsbM, PsbT, PsbX, PsbY, PsbZ, Psb30/Ycf12, at least 3 peripheral proteins of the oxygen-evolving complex and a large number of cofactors. It forms dimeric complexes. Requires Binds multiple chlorophylls and provides some of the ligands for the Ca-4Mn-5O cluster of the oxygen-evolving complex. It may also provide a ligand for a Cl- that is required for oxygen evolution. PSII binds additional chlorophylls, carotenoids and specific lipids. as cofactor.

The protein resides in the plastid. It is found in the chloroplast thylakoid membrane. Its function is as follows. One of the components of the core complex of photosystem II (PSII). It binds chlorophyll and helps catalyze the primary light-induced photochemical processes of PSII. PSII is a light-driven water:plastoquinone oxidoreductase, using light energy to abstract electrons from H(2)O, generating O(2) and a proton gradient subsequently used for ATP formation. The polypeptide is Photosystem II CP43 reaction center protein (Guillardia theta (Cryptophyte)).